The primary structure comprises 374 residues: tRNA-specific 2-thiouridylase MnmA (374 aa).

ATP contacts are provided by residues 13 to 20 (GMSGGVDS) and Met39. An interaction with target base in tRNA region spans residues 99 to 101 (NPD). The active-site Nucleophile is Cys104. A disulfide bridge connects residues Cys104 and Cys201. Residue Gly128 participates in ATP binding. The segment at 151–153 (KDQ) is interaction with tRNA. The Cysteine persulfide intermediate role is filled by Cys201. The tract at residues 313–314 (RY) is interaction with tRNA.

Belongs to the MnmA/TRMU family.

It is found in the cytoplasm. It catalyses the reaction S-sulfanyl-L-cysteinyl-[protein] + uridine(34) in tRNA + AH2 + ATP = 2-thiouridine(34) in tRNA + L-cysteinyl-[protein] + A + AMP + diphosphate + H(+). Functionally, catalyzes the 2-thiolation of uridine at the wobble position (U34) of tRNA, leading to the formation of s(2)U34. The polypeptide is tRNA-specific 2-thiouridylase MnmA (Streptococcus equi subsp. zooepidemicus (strain H70)).